The primary structure comprises 726 residues: Long-chain-fatty-acid--CoA ligase ACSBG1 (726 aa).

Residues 1-39 (MPDSRAAPQESLLDASLGTTQENVGTSSLTDGQTLSKEP) form a disordered region. Residues 17 to 36 (LGTTQENVGTSSLTDGQTLS) are compositionally biased toward polar residues. Ser-36 carries the post-translational modification Phosphoserine. A Phosphotyrosine modification is found at Tyr-641. Residues 707–726 (SKQGSSLPGFSLRWQTGASS) form a disordered region.

It belongs to the ATP-dependent AMP-binding enzyme family. Bubblegum subfamily.

The protein resides in the cytoplasm. It is found in the cytoplasmic vesicle. It localises to the microsome. The protein localises to the endoplasmic reticulum. Its subcellular location is the cell membrane. It catalyses the reaction a long-chain fatty acid + ATP + CoA = a long-chain fatty acyl-CoA + AMP + diphosphate. The enzyme catalyses (E)-hexadec-2-enoate + ATP + CoA = (2E)-hexadecenoyl-CoA + AMP + diphosphate. It carries out the reaction hexadecanoate + ATP + CoA = hexadecanoyl-CoA + AMP + diphosphate. Its function is as follows. Catalyzes the conversion of fatty acids such as long-chain and very long-chain fatty acids to their active form acyl-CoAs for both synthesis of cellular lipids, and degradation via beta-oxidation. Can activate diverse saturated, monosaturated and polyunsaturated fatty acids. This is Long-chain-fatty-acid--CoA ligase ACSBG1 from Bos taurus (Bovine).